A 280-amino-acid chain; its full sequence is Bis(5'-nucleosyl)-tetraphosphatase, symmetrical (280 aa).

Belongs to the Ap4A hydrolase family.

It catalyses the reaction P(1),P(4)-bis(5'-adenosyl) tetraphosphate + H2O = 2 ADP + 2 H(+). Its function is as follows. Hydrolyzes diadenosine 5',5'''-P1,P4-tetraphosphate to yield ADP. This Shigella boydii serotype 18 (strain CDC 3083-94 / BS512) protein is Bis(5'-nucleosyl)-tetraphosphatase, symmetrical.